We begin with the raw amino-acid sequence, 174 residues long: Ferredoxin-2, mitochondrial (174 aa).

A mitochondrion-targeting transit peptide spans 1–43; it reads MAASMARGVSARVLLRAAGGSWGPRAGHAAVTSRTFGTTGERR. Positions 26-52 are disordered; the sequence is AGHAAVTSRTFGTTGERRAGEEAADSP. In terms of domain architecture, 2Fe-2S ferredoxin-type spans 59-161; that stretch reads VNVVFVDRSG…GVEFALPKIT (103 aa). Residues Cys96, Cys102, Cys105, and Cys142 each coordinate [2Fe-2S] cluster.

This sequence belongs to the adrenodoxin/putidaredoxin family. Component of the mitochondrial core iron-sulfur cluster (ISC) complex composed of NFS1, LYRM4, NDUFAB1, ISCU, FXN, and FDX2; this complex is a heterohexamer containing two copies of each monomer. Form a heterodimer complex with NFS1. Interacts (in both their reduced and oxidized states) with the cysteine desulfurase (NFS1:LYRM4) complex; this interaction stimulates cysteine desulfurase activity, and serves as a reductant for Fe-S cluster assembly. [2Fe-2S] cluster serves as cofactor.

It localises to the mitochondrion. The protein localises to the mitochondrion matrix. In terms of biological role, electron donor, of the core iron-sulfur cluster (ISC) assembly complex, that acts to reduce the persulfide into sulfide during [2Fe-2S] clusters assembly on the scaffolding protein ISCU. The core iron-sulfur cluster (ISC) assembly complex is involved in the de novo synthesis of a [2Fe-2S] cluster, the first step of the mitochondrial iron-sulfur protein biogenesis. This process is initiated by the cysteine desulfurase complex (NFS1:LYRM4:NDUFAB1) that produces persulfide which is delivered on the scaffold protein ISCU in a FXN-dependent manner. Then this complex is stabilized by FDX2 which provides reducing equivalents to accomplish the [2Fe-2S] cluster assembly. Finally, the [2Fe-2S] cluster is transferred from ISCU to chaperone proteins, including HSCB, HSPA9 and GLRX5. Essential for coenzyme Q biosynthesis: together with FDXR, transfers the electrons required for the hydroxylation reaction performed by COQ6. This Mus musculus (Mouse) protein is Ferredoxin-2, mitochondrial.